A 223-amino-acid polypeptide reads, in one-letter code: 7-cyano-7-deazaguanine synthase (223 aa).

Residue 15-25 coordinates ATP; sequence FSGGQDSTTCL. Cys-191, Cys-200, Cys-203, and Cys-206 together coordinate Zn(2+).

The protein belongs to the QueC family. In terms of assembly, homodimer. Zn(2+) is required as a cofactor.

The enzyme catalyses 7-carboxy-7-deazaguanine + NH4(+) + ATP = 7-cyano-7-deazaguanine + ADP + phosphate + H2O + H(+). The protein operates within purine metabolism; 7-cyano-7-deazaguanine biosynthesis. Functionally, catalyzes the ATP-dependent conversion of 7-carboxy-7-deazaguanine (CDG) to 7-cyano-7-deazaguanine (preQ(0)). The polypeptide is 7-cyano-7-deazaguanine synthase (Staphylococcus epidermidis (strain ATCC 35984 / DSM 28319 / BCRC 17069 / CCUG 31568 / BM 3577 / RP62A)).